The primary structure comprises 86 residues: Progonadoliberin-2 (86 aa).

A signal peptide spans 1-24 (MVSVARLVFMLGPLLCLGAQLSSS). Gln-25 bears the Pyrrolidone carboxylic acid mark. Position 34 is a glycine amide (Gly-34).

This sequence belongs to the GnRH family.

It is found in the secreted. Its function is as follows. Stimulates the secretion of gonadotropins. The sequence is that of Progonadoliberin-2 (gnrh2) from Oncorhynchus mykiss (Rainbow trout).